A 422-amino-acid polypeptide reads, in one-letter code: Putative polyketide beta-ketoacyl synthase 1 (422 aa).

The region spanning 2–416 is the Ketosynthase family 3 (KS3) domain; it reads TRRVAVTGIG…GFQSAVLLTG (415 aa). Residues Cys-169, His-309, and His-346 each act as for beta-ketoacyl synthase activity in the active site.

The protein belongs to the thiolase-like superfamily. Beta-ketoacyl-ACP synthases family.

The protein operates within antibiotic biosynthesis; curamycin biosynthesis. The protein is Putative polyketide beta-ketoacyl synthase 1 (curA) of Streptomyces cyaneus (Streptomyces curacoi).